A 174-amino-acid polypeptide reads, in one-letter code: Crossover junction endodeoxyribonuclease RuvC (174 aa).

Active-site residues include Asp8, Glu69, and Asp141. Mg(2+) is bound by residues Asp8, Glu69, and Asp141.

The protein belongs to the RuvC family. In terms of assembly, homodimer which binds Holliday junction (HJ) DNA. The HJ becomes 2-fold symmetrical on binding to RuvC with unstacked arms; it has a different conformation from HJ DNA in complex with RuvA. In the full resolvosome a probable DNA-RuvA(4)-RuvB(12)-RuvC(2) complex forms which resolves the HJ. Requires Mg(2+) as cofactor.

It localises to the cytoplasm. The enzyme catalyses Endonucleolytic cleavage at a junction such as a reciprocal single-stranded crossover between two homologous DNA duplexes (Holliday junction).. Its function is as follows. The RuvA-RuvB-RuvC complex processes Holliday junction (HJ) DNA during genetic recombination and DNA repair. Endonuclease that resolves HJ intermediates. Cleaves cruciform DNA by making single-stranded nicks across the HJ at symmetrical positions within the homologous arms, yielding a 5'-phosphate and a 3'-hydroxyl group; requires a central core of homology in the junction. The consensus cleavage sequence is 5'-(A/T)TT(C/G)-3'. Cleavage occurs on the 3'-side of the TT dinucleotide at the point of strand exchange. HJ branch migration catalyzed by RuvA-RuvB allows RuvC to scan DNA until it finds its consensus sequence, where it cleaves and resolves the cruciform DNA. This Xanthomonas oryzae pv. oryzae (strain MAFF 311018) protein is Crossover junction endodeoxyribonuclease RuvC.